Consider the following 22-residue polypeptide: Fuctinin-1 (22 aa).

A disordered region spans residues 1-22 (SASPGLPKGEKEQQEAIEHIDE). Positions 8-22 (KGEKEQQEAIEHIDE) are enriched in basic and acidic residues.

This sequence to human SET/PHAPII protein. In terms of assembly, oligomer.

It localises to the cytoplasm. Its function is as follows. Has a role in the physiological regulation of fucosylation processes. The chain is Fuctinin-1 from Rattus norvegicus (Rat).